The sequence spans 339 residues: Senescence-specific cysteine protease SAG39 (339 aa).

An N-terminal signal peptide occupies residues 1-23 (MAMAKALLFAILGCLCLCSAVLA). Intrachain disulfides connect Cys144-Cys187, Cys178-Cys220, and Cys276-Cys328. Cys147 is an active-site residue. Residues His282 and Asn303 contribute to the active site.

This sequence belongs to the peptidase C1 family. Low expression in mature leaves.

Its subcellular location is the vacuole. Its function is as follows. Cysteine protease that may have a developmental senescence specific cell death function during apoptosis, heavy metal detoxification, and hypersensitive response. This is Senescence-specific cysteine protease SAG39 from Oryza sativa subsp. japonica (Rice).